A 235-amino-acid chain; its full sequence is MTELARLKFYATQPHTCSYLPEEQATTLFLDPSQPMDVQVYADLSDMGFRRSGDHLYRPHCQNCSACVPARIPVNLFIPDRQQKRILKRNVDIQVQSAKPAFTQEYFDLYQRYIEQRHADGDMFPPSQEQFSTFLVRDLPFSRFYEFRVDQRLLAVAVTDLLPNGLSAVYTFYEPDEERRSLGRYAILWQIAEAARLQLQAVYLGYWIKNCKKMNYKTQYRPIELLTNQRWVTLY.

This sequence belongs to the R-transferase family. Bpt subfamily.

It is found in the cytoplasm. The enzyme catalyses N-terminal L-glutamyl-[protein] + L-leucyl-tRNA(Leu) = N-terminal L-leucyl-L-glutamyl-[protein] + tRNA(Leu) + H(+). The catalysed reaction is N-terminal L-aspartyl-[protein] + L-leucyl-tRNA(Leu) = N-terminal L-leucyl-L-aspartyl-[protein] + tRNA(Leu) + H(+). In terms of biological role, functions in the N-end rule pathway of protein degradation where it conjugates Leu from its aminoacyl-tRNA to the N-termini of proteins containing an N-terminal aspartate or glutamate. This chain is Aspartate/glutamate leucyltransferase, found in Pseudomonas syringae pv. syringae (strain B728a).